We begin with the raw amino-acid sequence, 194 residues long: MFGYRSNVPKVRLTTDRLVVRLVHDRDAWRLADYYAENRHFLKPWEPVRDESHCYPSGWQARLGMINEFHKQGSAFYFGLFDPDEKEIIGVANFSNVVRGSFHACYLGYSIGQKWQGKGLMFEALTAAIRYMQRTQHIHRIMANYMPHNKRSGDLLARLGFEKEGYAKDYLLIDGQWRDHVLTALTTPDWTPGR.

An N-acetyltransferase domain is found at 18–188 (LVVRLVHDRD…DHVLTALTTP (171 aa)).

The protein belongs to the acetyltransferase family. RimJ subfamily.

It is found in the cytoplasm. The enzyme catalyses N-terminal L-alanyl-[ribosomal protein uS5] + acetyl-CoA = N-terminal N(alpha)-acetyl-L-alanyl-[ribosomal protein uS5] + CoA + H(+). Its function is as follows. Acetylates the N-terminal alanine of ribosomal protein uS5. This is [Ribosomal protein uS5]-alanine N-acetyltransferase (rimJ) from Shigella flexneri.